We begin with the raw amino-acid sequence, 1026 residues long: Multidrug resistance protein MdtC (1026 aa).

A run of 11 helical transmembrane segments spans residues 15 to 35 (ILIA…LPVA), 333 to 353 (EVEE…FLFL), 360 to 380 (LIPA…MYLC), 387 to 407 (LSLM…IVVL), 431 to 451 (VGFT…PLLL), 463 to 483 (FAVT…TLTP), 528 to 548 (LVGV…IAIP), 853 to 873 (LILI…LYES), 897 to 917 (LFNA…IGIV), 953 to 973 (PIMM…LSGG), and 984 to 1004 (ITIV…TPVV).

It belongs to the resistance-nodulation-cell division (RND) (TC 2.A.6) family. MdtC subfamily. Part of a tripartite efflux system composed of MdtA, MdtB and MdtC. MdtC forms a heteromultimer with MdtB.

Its subcellular location is the cell inner membrane. This Salmonella arizonae (strain ATCC BAA-731 / CDC346-86 / RSK2980) protein is Multidrug resistance protein MdtC.